The sequence spans 219 residues: Proteasome subunit beta type-9 (219 aa).

A propeptide spans 1–20 (removed in mature form); that stretch reads MLRAGAPTAGSFRTEEVHTG. Thr-21 functions as the Nucleophile in the catalytic mechanism. Lys-53 and Lys-109 each carry N6-acetyllysine.

This sequence belongs to the peptidase T1B family. The 26S proteasome consists of a 20S proteasome core and two 19S regulatory subunits. The 20S proteasome core is composed of 28 subunits that are arranged in four stacked rings, resulting in a barrel-shaped structure. The two end rings are each formed by seven alpha subunits, and the two central rings are each formed by seven beta subunits. The catalytic chamber with the active sites is on the inside of the barrel. Component of the immunoproteasome, where it displaces the equivalent housekeeping subunit PSMB6. Component of the spermatoproteasome, a form of the proteasome specifically found in testis. Post-translationally, autocleaved. The resulting N-terminal Thr residue of the mature subunit is responsible for the nucleophile proteolytic activity.

The protein resides in the cytoplasm. The protein localises to the nucleus. The enzyme catalyses Cleavage of peptide bonds with very broad specificity.. Functionally, the proteasome is a multicatalytic proteinase complex which is characterized by its ability to cleave peptides with Arg, Phe, Tyr, Leu, and Glu adjacent to the leaving group at neutral or slightly basic pH. The proteasome has an ATP-dependent proteolytic activity. This subunit is involved in antigen processing to generate class I binding peptides. In Mus terricolor (Earth-colored mouse), this protein is Proteasome subunit beta type-9 (Psmb9).